The primary structure comprises 214 residues: MSTIAVIDYDMGNLHSVCKGLEKAGATPKITDSSIEIDKADAVILPGVGSFDPAVQHLRTRNLEIPIKQVIASGKPFLGICLGLQILFESSEEGQEPGLGIFAGKVCRFKSEPGLTIPQMGWNKLQFTQPEHLLWSEIGSQPWVYFVHSYYVDPTDSQVTAATVTHGHQTVTAAVGKDNLIAVQFHPEKSSTAGLKILSNFVSKVIPKNLALAS.

Residues 3–211 (TIAVIDYDMG…VSKVIPKNLA (209 aa)) form the Glutamine amidotransferase type-1 domain. Catalysis depends on cysteine 81, which acts as the Nucleophile. Catalysis depends on residues histidine 186 and glutamate 188.

As to quaternary structure, heterodimer of HisH and HisF.

Its subcellular location is the cytoplasm. The enzyme catalyses 5-[(5-phospho-1-deoxy-D-ribulos-1-ylimino)methylamino]-1-(5-phospho-beta-D-ribosyl)imidazole-4-carboxamide + L-glutamine = D-erythro-1-(imidazol-4-yl)glycerol 3-phosphate + 5-amino-1-(5-phospho-beta-D-ribosyl)imidazole-4-carboxamide + L-glutamate + H(+). It carries out the reaction L-glutamine + H2O = L-glutamate + NH4(+). It participates in amino-acid biosynthesis; L-histidine biosynthesis; L-histidine from 5-phospho-alpha-D-ribose 1-diphosphate: step 5/9. IGPS catalyzes the conversion of PRFAR and glutamine to IGP, AICAR and glutamate. The HisH subunit catalyzes the hydrolysis of glutamine to glutamate and ammonia as part of the synthesis of IGP and AICAR. The resulting ammonia molecule is channeled to the active site of HisF. This is Imidazole glycerol phosphate synthase subunit HisH from Trichodesmium erythraeum (strain IMS101).